A 379-amino-acid chain; its full sequence is L-lactate dehydrogenase (379 aa).

In terms of domain architecture, FMN hydroxy acid dehydrogenase spans 1–379; it reads MIISASTDYR…ITSDLLVKER (379 aa). Residue Y24 coordinates substrate. FMN is bound by residues S106 and Q127. Residue Y129 participates in substrate binding. T155 provides a ligand contact to FMN. R164 lines the substrate pocket. Position 251 (K251) interacts with FMN. The active-site Proton acceptor is H275. Substrate is bound at residue R278. 306–330 lines the FMN pocket; sequence DSGIRTGLDVVRMLALGADTVLLGR.

The protein belongs to the FMN-dependent alpha-hydroxy acid dehydrogenase family. Homotetramer. Requires FMN as cofactor.

Its subcellular location is the cell inner membrane. The catalysed reaction is (S)-lactate + A = pyruvate + AH2. Its function is as follows. Catalyzes the conversion of L-lactate to pyruvate. Is coupled to the respiratory chain. In Ectopseudomonas mendocina (strain ymp) (Pseudomonas mendocina), this protein is L-lactate dehydrogenase.